The following is a 417-amino-acid chain: C4-dicarboxylate transport protein (417 aa).

Transmembrane regions (helical) follow at residues Ile4–Gly26, Lys41–Gly60, Ala72–Ile94, Phe137–Ala159, Leu180–Phe202, Ala217–Trp239, Val285–Leu307, and Phe347–Val369.

It belongs to the dicarboxylate/amino acid:cation symporter (DAACS) (TC 2.A.23) family.

The protein localises to the cell inner membrane. Functionally, responsible for the transport of dicarboxylates such as succinate, fumarate, and malate from the periplasm across the membrane. The protein is C4-dicarboxylate transport protein of Caulobacter vibrioides (strain ATCC 19089 / CIP 103742 / CB 15) (Caulobacter crescentus).